The primary structure comprises 119 residues: Large ribosomal subunit protein eL31 (119 aa).

Belongs to the eukaryotic ribosomal protein eL31 family.

The chain is Large ribosomal subunit protein eL31 (RPL31) from Cyanophora paradoxa.